Here is a 412-residue protein sequence, read N- to C-terminus: NADH-quinone oxidoreductase subunit D (412 aa).

The protein belongs to the complex I 49 kDa subunit family. As to quaternary structure, NDH-1 is composed of 14 different subunits. Subunits NuoB, C, D, E, F, and G constitute the peripheral sector of the complex.

The protein localises to the cell inner membrane. The catalysed reaction is a quinone + NADH + 5 H(+)(in) = a quinol + NAD(+) + 4 H(+)(out). Its function is as follows. NDH-1 shuttles electrons from NADH, via FMN and iron-sulfur (Fe-S) centers, to quinones in the respiratory chain. The immediate electron acceptor for the enzyme in this species is believed to be ubiquinone. Couples the redox reaction to proton translocation (for every two electrons transferred, four hydrogen ions are translocated across the cytoplasmic membrane), and thus conserves the redox energy in a proton gradient. The sequence is that of NADH-quinone oxidoreductase subunit D from Sulfurimonas denitrificans (strain ATCC 33889 / DSM 1251) (Thiomicrospira denitrificans (strain ATCC 33889 / DSM 1251)).